Consider the following 446-residue polypeptide: Golgi reassembly-stacking protein 1 (446 aa).

The tract at residues 1–20 is disordered; sequence MGLGASSEQPAGGEGFHLHG. G2 is lipidated: N-myristoyl glycine. PDZ GRASP-type domains follow at residues 14-104 and 110-198; these read EGFH…FCSF and HVWH…YGYL. Positions 14–214 are GRASP; that stretch reads EGFHLHGVQE…PSSQHKKPPG (201 aa). Zn(2+) is bound by residues H17, H19, and C102. The interval 189 to 201 is essential for interaction with GOLGA2/GM130; the sequence is LGCGIGYGYLHRI. Disordered stretches follow at residues 202 to 252 and 343 to 446; these read PTQP…LGSR and VSGP…EPGL. A phosphothreonine mark is found at T216, T220, and T224. Positions 343–354 are enriched in low complexity; it reads VSGPEDIGSSSS. Phosphoserine is present on residues S365, S367, and S376.

It belongs to the GORASP family. In terms of assembly, homodimer. Forms higher-order oligomers under interphase but not mitotic conditions. Dimers of the protein on one membrane might be able to interact with dimers on another and so stack cisternae. Interacts with the C-terminus of GOLGA2/GM130 under both mitotic and non-mitotic conditions. The interaction is critical for the correct targeting of both proteins to the cis-Golgi. Interacts with TMED2 and TMED3. Post-translationally, phosphorylated by CDC2/B1 and PLK kinases during mitosis. Phosphorylation cycle correlates with the cisternal stacking cycle. Phosphorylation of the homodimer prevents the association of dimers into higher-order oligomers, leading to cisternal unstacking. Target for caspase-3 cleavage during apoptosis. The cleavage contributes to Golgi fragmentation and occurs very early in the execution phase of apoptosis. In terms of processing, myristoylated.

It localises to the golgi apparatus. It is found in the cis-Golgi network membrane. In terms of biological role, key structural protein of the Golgi apparatus. The membrane cisternae of the Golgi apparatus adhere to each other to form stacks, which are aligned side by side to form the Golgi ribbon. Acting in concert with GORASP2/GRASP55, is required for the formation and maintenance of the Golgi ribbon, and may be dispensable for the formation of stacks. However, other studies suggest that GORASP1 plays an important role in assembly and membrane stacking of the cisternae, and in the reassembly of Golgi stacks after breakdown during mitosis. Caspase-mediated cleavage of GORASP1 is required for fragmentation of the Golgi during apoptosis. Also mediates, via its interaction with GOLGA2/GM130, the docking of transport vesicles with the Golgi membranes. Mediates ER stress-induced unconventional (ER/Golgi-independent) trafficking of core-glycosylated CFTR to cell membrane. The protein is Golgi reassembly-stacking protein 1 (Gorasp1) of Mus musculus (Mouse).